The primary structure comprises 314 residues: Polyadenylate-binding protein-interacting protein 8 (314 aa).

Residues 1–47 (MAAITEMATDSNDVINDGGTGDGIEKSTDSKPEIESDDLKPKSKPEY) are disordered. Residues 23–47 (GIEKSTDSKPEIESDDLKPKSKPEY) show a composition bias toward basic and acidic residues. The PAM2-like signature appears at 59-69 (KLNPEAKEFFP). Positions 99–112 (RRRRNNYNQGRRVR) match the Bipartite nuclear localization signal motif. 2 RRM domains span residues 128–203 (RTVY…PSKT) and 225–301 (RTIY…PSKT).

Interacts with MPC. Expressed in cauline leaves, stems, rosette leaves, immature siliques and primary inflorescences but at a low level.

The protein localises to the nucleus. The chain is Polyadenylate-binding protein-interacting protein 8 (CID8) from Arabidopsis thaliana (Mouse-ear cress).